We begin with the raw amino-acid sequence, 205 residues long: Probable GTP-binding protein EngB (205 aa).

Positions N25 to K199 constitute an EngB-type G domain. Residues G33–S40, G60–L64, D78–G81, T145–D148, and F178–S180 contribute to the GTP site. Mg(2+) is bound by residues S40 and T62.

It belongs to the TRAFAC class TrmE-Era-EngA-EngB-Septin-like GTPase superfamily. EngB GTPase family. It depends on Mg(2+) as a cofactor.

Necessary for normal cell division and for the maintenance of normal septation. The polypeptide is Probable GTP-binding protein EngB (Buchnera aphidicola subsp. Acyrthosiphon pisum (strain 5A)).